The sequence spans 632 residues: Chaperone protein DnaK (632 aa).

The residue at position 199 (T199) is a Phosphothreonine; by autocatalysis. Positions 597–611 (AAQQAGQAEGQAAQE) are enriched in low complexity. The segment at 597–632 (AAQQAGQAEGQAAQEPSQSTGNAQAEATDAEYEEVK) is disordered. Residues 612 to 621 (PSQSTGNAQA) show a composition bias toward polar residues.

The protein belongs to the heat shock protein 70 family.

Acts as a chaperone. The polypeptide is Chaperone protein DnaK (Amoebophilus asiaticus (strain 5a2)).